The chain runs to 1605 residues: Pentafunctional AROM polypeptide (1605 aa).

A 3-dehydroquinate synthase region spans residues 1–384; that stretch reads MTGPTKISIL…YEPRASVVPN (384 aa). NAD(+) contacts are provided by residues 44-46, 81-84, 114-116, and Asp-119; these read DTN, EVSK, and GGV. Arg-130 contributes to the 7-phospho-2-dehydro-3-deoxy-D-arabino-heptonate binding site. 139–140 is a binding site for NAD(+); it reads TT. Positions 146 and 152 each coordinate 7-phospho-2-dehydro-3-deoxy-D-arabino-heptonate. Lys-161 lines the NAD(+) pocket. Residue Asn-162 participates in 7-phospho-2-dehydro-3-deoxy-D-arabino-heptonate binding. NAD(+) contacts are provided by residues 179–182 and Asn-190; that span reads FLET. Glu-194 contacts Zn(2+). Residues 194 to 197 and Lys-250 contribute to the 7-phospho-2-dehydro-3-deoxy-D-arabino-heptonate site; that span reads EVIK. The active-site Proton acceptor; for 3-dehydroquinate synthase activity is Glu-260. 7-phospho-2-dehydro-3-deoxy-D-arabino-heptonate is bound by residues 264–268 and His-271; that span reads RNLLN. Zn(2+) is bound at residue His-271. His-275 serves as the catalytic Proton acceptor; for 3-dehydroquinate synthase activity. 7-phospho-2-dehydro-3-deoxy-D-arabino-heptonate contacts are provided by His-287 and Lys-356. His-287 is a Zn(2+) binding site. The interval 397 to 842 is EPSP synthase; that stretch reads VHPGVSTTSE…WDTLRQKFAV (446 aa). Residue Cys-824 is the For EPSP synthase activity of the active site. The segment at 864-1055 is shikimate kinase; it reads SASVFIIGMR…KKKQHSFFVS (192 aa). 871–878 provides a ligand contact to ATP; that stretch reads GMRGAGKT. Positions 1056 to 1276 are 3-dehydroquinase; sequence LTLPDVRGAD…AAPGQLSATD (221 aa). The active-site Proton acceptor; for 3-dehydroquinate dehydratase activity is His-1179. Lys-1207 acts as the Schiff-base intermediate with substrate; for 3-dehydroquinate dehydratase activity in catalysis. Positions 1289 to 1605 are shikimate dehydrogenase; the sequence is KKRFALFGSP…LSGRTMLTCS (317 aa).

This sequence in the N-terminal section; belongs to the sugar phosphate cyclases superfamily. Dehydroquinate synthase family. The protein in the 2nd section; belongs to the EPSP synthase family. It in the 3rd section; belongs to the shikimate kinase family. In the 4th section; belongs to the type-I 3-dehydroquinase family. This sequence in the C-terminal section; belongs to the shikimate dehydrogenase family. In terms of assembly, homodimer. Zn(2+) serves as cofactor.

Its subcellular location is the cytoplasm. The enzyme catalyses 7-phospho-2-dehydro-3-deoxy-D-arabino-heptonate = 3-dehydroquinate + phosphate. The catalysed reaction is 3-dehydroquinate = 3-dehydroshikimate + H2O. It catalyses the reaction shikimate + NADP(+) = 3-dehydroshikimate + NADPH + H(+). It carries out the reaction shikimate + ATP = 3-phosphoshikimate + ADP + H(+). The enzyme catalyses 3-phosphoshikimate + phosphoenolpyruvate = 5-O-(1-carboxyvinyl)-3-phosphoshikimate + phosphate. Its pathway is metabolic intermediate biosynthesis; chorismate biosynthesis; chorismate from D-erythrose 4-phosphate and phosphoenolpyruvate: step 2/7. It participates in metabolic intermediate biosynthesis; chorismate biosynthesis; chorismate from D-erythrose 4-phosphate and phosphoenolpyruvate: step 3/7. It functions in the pathway metabolic intermediate biosynthesis; chorismate biosynthesis; chorismate from D-erythrose 4-phosphate and phosphoenolpyruvate: step 4/7. The protein operates within metabolic intermediate biosynthesis; chorismate biosynthesis; chorismate from D-erythrose 4-phosphate and phosphoenolpyruvate: step 5/7. Its pathway is metabolic intermediate biosynthesis; chorismate biosynthesis; chorismate from D-erythrose 4-phosphate and phosphoenolpyruvate: step 6/7. In terms of biological role, the AROM polypeptide catalyzes 5 consecutive enzymatic reactions in prechorismate polyaromatic amino acid biosynthesis. This is Pentafunctional AROM polypeptide from Aspergillus fumigatus (strain CBS 144.89 / FGSC A1163 / CEA10) (Neosartorya fumigata).